Here is a 427-residue protein sequence, read N- to C-terminus: Enolase (427 aa).

Residue Gln-163 participates in (2R)-2-phosphoglycerate binding. Catalysis depends on Glu-205, which acts as the Proton donor. The Mg(2+) site is built by Asp-242, Glu-285, and Asp-312. Lys-337, Arg-366, Ser-367, and Lys-388 together coordinate (2R)-2-phosphoglycerate. Lys-337 functions as the Proton acceptor in the catalytic mechanism.

The protein belongs to the enolase family. Mg(2+) serves as cofactor.

The protein resides in the cytoplasm. It localises to the secreted. The protein localises to the cell surface. It carries out the reaction (2R)-2-phosphoglycerate = phosphoenolpyruvate + H2O. The protein operates within carbohydrate degradation; glycolysis; pyruvate from D-glyceraldehyde 3-phosphate: step 4/5. In terms of biological role, catalyzes the reversible conversion of 2-phosphoglycerate (2-PG) into phosphoenolpyruvate (PEP). It is essential for the degradation of carbohydrates via glycolysis. This Burkholderia multivorans (strain ATCC 17616 / 249) protein is Enolase.